Reading from the N-terminus, the 142-residue chain is Large ribosomal subunit protein uL13 (142 aa).

Belongs to the universal ribosomal protein uL13 family. As to quaternary structure, part of the 50S ribosomal subunit.

This protein is one of the early assembly proteins of the 50S ribosomal subunit, although it is not seen to bind rRNA by itself. It is important during the early stages of 50S assembly. This chain is Large ribosomal subunit protein uL13, found in Halorhodospira halophila (strain DSM 244 / SL1) (Ectothiorhodospira halophila (strain DSM 244 / SL1)).